Reading from the N-terminus, the 72-residue chain is Gas vesicle protein A (72 aa).

It belongs to the gas vesicle GvpA family. As to quaternary structure, the gas vesicle shell is 2 nm thick and consists of a single layer of this protein. It forms helical ribs nearly perpendicular to the long axis of the vesicle.

It localises to the gas vesicle shell. Its function is as follows. Gas vesicles are hollow, gas filled proteinaceous nanostructures found in some microorganisms. During planktonic growth they allow positioning of the organism at a favorable depth for light or nutrient acquisition. GvpA forms the protein shell. This Synechococcus sp. (strain JA-3-3Ab) (Cyanobacteria bacterium Yellowstone A-Prime) protein is Gas vesicle protein A.